The primary structure comprises 113 residues: Integration host factor subunit alpha (113 aa).

2 disordered regions span residues Gly59 to Ile80 and Gln94 to Glu113. Positions Asn104–Glu113 are enriched in pro residues.

It belongs to the bacterial histone-like protein family. As to quaternary structure, heterodimer of an alpha and a beta chain.

In terms of biological role, this protein is one of the two subunits of integration host factor, a specific DNA-binding protein that functions in genetic recombination as well as in transcriptional and translational control. In Bordetella pertussis (strain Tohama I / ATCC BAA-589 / NCTC 13251), this protein is Integration host factor subunit alpha.